An 821-amino-acid chain; its full sequence is MTIPGAGFAGPFAVREFPMTANELRAAELRELLNRYGHEYYVLDAPTVPDAEYDRLFRELQALEEAHPELAVSDSPTRRVGGAPLDEFVSVVHAVPMLSLSNAFSDMQLTDPAERHSELIQFDERVRKGLDAAEVEYATEPKFDGLAISLLYENGVLTRAATRGDGVAGEQVTENVRTIRAIPLKLDGANPPALLEVRGEVLMLKRDFERLNADQIARGDKTFANPRNAAAGSLRQLDSRITAQRRLSFFAYSIAQVGGADWPATHAGEMAWLKTLGFPVVMDSLRPVVSGAAGLAGYYEAVLTARAGLPFEIDGVVYKVNRRDQQEALGFVSRAPRWAIAHKFPAEEALTCVEAIEEQVGRTGAITPVARLKPVFVGGVTVTNATLHNEDEVRRKDVRVGDTVVVRRAGDVIPEVVSVVLAQRPMQPAEGGDLFSAGEEPRYPAYRLPTACPVCGSHVVREEGEAIARCSGGLSCRAQRSQAIQHFAGRRMMDIDGLGERYIDKLVEYGYVQGVADLYRLKLEDLLEMKRRADEDEGVTPETVKAGKVASKWAENLIEAIDASRAPPLARLLFALGIRHVGESTAKTLADWLGTMALIRRCPAALFAALPDIGGVVADSLADFFAEDNNEKALDALLAEVKPADEHAPSPKLRERLDDASLLARLAIPRLTEVRSQQLAAQRSLAWLGQSERRALLALELPAEVVNALADWLDEPGRRAALASLAGLRDEILASLPAAAEAAALPLEGKTLVLTGTLPTLSRDQAKALIEAAGGKVSGSVSKKTHYVVAGEEAGGKLAKAQELGVAILDEAGLQALLAGN.

NAD(+)-binding positions include 50–54, 99–100, and E140; these read DAEYD and SL. The active-site N6-AMP-lysine intermediate is the K142. The NAD(+) site is built by R163, E200, K319, and K343. Zn(2+) is bound by residues C452, C455, C470, and C476. One can recognise a BRCT domain in the interval 742–821; that stretch reads AAALPLEGKT…AGLQALLAGN (80 aa).

The protein belongs to the NAD-dependent DNA ligase family. LigA subfamily. Requires Mg(2+) as cofactor. It depends on Mn(2+) as a cofactor.

It carries out the reaction NAD(+) + (deoxyribonucleotide)n-3'-hydroxyl + 5'-phospho-(deoxyribonucleotide)m = (deoxyribonucleotide)n+m + AMP + beta-nicotinamide D-nucleotide.. DNA ligase that catalyzes the formation of phosphodiester linkages between 5'-phosphoryl and 3'-hydroxyl groups in double-stranded DNA using NAD as a coenzyme and as the energy source for the reaction. It is essential for DNA replication and repair of damaged DNA. The chain is DNA ligase from Chromobacterium violaceum (strain ATCC 12472 / DSM 30191 / JCM 1249 / CCUG 213 / NBRC 12614 / NCIMB 9131 / NCTC 9757 / MK).